A 248-amino-acid chain; its full sequence is Probable septum site-determining protein MinC (248 aa).

Residues 115 to 144 (PTAVSPPPPPPPPARAEPAPPAARPAPGRM) are disordered. Positions 118 to 138 (VSPPPPPPPPARAEPAPPAAR) are enriched in pro residues.

Belongs to the MinC family. In terms of assembly, interacts with MinD and FtsZ.

Its function is as follows. Cell division inhibitor that blocks the formation of polar Z ring septums. Rapidly oscillates between the poles of the cell to destabilize FtsZ filaments that have formed before they mature into polar Z rings. Prevents FtsZ polymerization. The chain is Probable septum site-determining protein MinC from Xanthomonas euvesicatoria pv. vesicatoria (strain 85-10) (Xanthomonas campestris pv. vesicatoria).